The following is a 121-amino-acid chain: MARIAGIDIPREKRVEIALTYIYGVGLTRSKLILSNTGVNPDIRVKDLSDSDVQKLRGATEDFTVEGDLRRKEGMAMKRLQDIGCVRGRRHRMSLPVRGQRTRTNARTRRGSRKTVAGRKK.

Positions 89–121 (RRHRMSLPVRGQRTRTNARTRRGSRKTVAGRKK) are disordered. A compositionally biased stretch (basic residues) spans 100-121 (QRTRTNARTRRGSRKTVAGRKK).

Belongs to the universal ribosomal protein uS13 family. As to quaternary structure, part of the 30S ribosomal subunit. Forms a loose heterodimer with protein S19. Forms two bridges to the 50S subunit in the 70S ribosome.

Located at the top of the head of the 30S subunit, it contacts several helices of the 16S rRNA. In the 70S ribosome it contacts the 23S rRNA (bridge B1a) and protein L5 of the 50S subunit (bridge B1b), connecting the 2 subunits; these bridges are implicated in subunit movement. Contacts the tRNAs in the A and P-sites. This Prochlorococcus marinus subsp. pastoris (strain CCMP1986 / NIES-2087 / MED4) protein is Small ribosomal subunit protein uS13.